A 79-amino-acid polypeptide reads, in one-letter code: ATP synthase subunit 9, mitochondrial (79 aa).

The next 2 helical transmembrane spans lie at 21 to 41 and 59 to 79; these read SGLIGAGAGVGIVFGCLILAF and FALTEAIGLLALVMAFLILFI.

Belongs to the ATPase C chain family. In terms of assembly, F-type ATPases have 2 components, CF(1) - the catalytic core - and CF(0) - the membrane proton channel. CF(1) has five subunits: alpha(3), beta(3), gamma(1), delta(1), epsilon(1). CF(0) has three main subunits: a, b and c.

Its subcellular location is the mitochondrion membrane. Its function is as follows. Mitochondrial membrane ATP synthase (F(1)F(0) ATP synthase or Complex V) produces ATP from ADP in the presence of a proton gradient across the membrane which is generated by electron transport complexes of the respiratory chain. F-type ATPases consist of two structural domains, F(1) - containing the extramembraneous catalytic core and F(0) - containing the membrane proton channel, linked together by a central stalk and a peripheral stalk. During catalysis, ATP synthesis in the catalytic domain of F(1) is coupled via a rotary mechanism of the central stalk subunits to proton translocation. Part of the complex F(0) domain. A homomeric c-ring of probably 10 subunits is part of the complex rotary element. The protein is ATP synthase subunit 9, mitochondrial (ATP9) of Acanthamoeba castellanii (Amoeba).